We begin with the raw amino-acid sequence, 203 residues long: FMN-dependent NADH:quinone oxidoreductase 5 (203 aa).

Residues S9, 15 to 17, 95 to 98, and 139 to 142 each bind FMN; these read SAS, MYNF, and TSGG.

The protein belongs to the azoreductase type 1 family. Homodimer. FMN is required as a cofactor.

The enzyme catalyses 2 a quinone + NADH + H(+) = 2 a 1,4-benzosemiquinone + NAD(+). It carries out the reaction N,N-dimethyl-1,4-phenylenediamine + anthranilate + 2 NAD(+) = 2-(4-dimethylaminophenyl)diazenylbenzoate + 2 NADH + 2 H(+). Functionally, quinone reductase that provides resistance to thiol-specific stress caused by electrophilic quinones. Also exhibits azoreductase activity. Catalyzes the reductive cleavage of the azo bond in aromatic azo compounds to the corresponding amines. The protein is FMN-dependent NADH:quinone oxidoreductase 5 of Pseudomonas fluorescens (strain ATCC BAA-477 / NRRL B-23932 / Pf-5).